A 634-amino-acid chain; its full sequence is 1-deoxy-D-xylulose-5-phosphate synthase (634 aa).

Residues His-74 and 115–117 (AHS) contribute to the thiamine diphosphate site. Asp-146 is a Mg(2+) binding site. Residues 147–148 (GA), Asn-176, Tyr-283, and Glu-365 each bind thiamine diphosphate. Asn-176 is a Mg(2+) binding site.

The protein belongs to the transketolase family. DXPS subfamily. As to quaternary structure, homodimer. It depends on Mg(2+) as a cofactor. Thiamine diphosphate serves as cofactor.

The catalysed reaction is D-glyceraldehyde 3-phosphate + pyruvate + H(+) = 1-deoxy-D-xylulose 5-phosphate + CO2. It participates in metabolic intermediate biosynthesis; 1-deoxy-D-xylulose 5-phosphate biosynthesis; 1-deoxy-D-xylulose 5-phosphate from D-glyceraldehyde 3-phosphate and pyruvate: step 1/1. Its function is as follows. Catalyzes the acyloin condensation reaction between C atoms 2 and 3 of pyruvate and glyceraldehyde 3-phosphate to yield 1-deoxy-D-xylulose-5-phosphate (DXP). The chain is 1-deoxy-D-xylulose-5-phosphate synthase from Burkholderia cenocepacia (strain ATCC BAA-245 / DSM 16553 / LMG 16656 / NCTC 13227 / J2315 / CF5610) (Burkholderia cepacia (strain J2315)).